Here is a 253-residue protein sequence, read N- to C-terminus: Ubiquinone/menaquinone biosynthesis C-methyltransferase UbiE (253 aa).

Residues T76, D97, 125 to 126 (NA), and S142 each bind S-adenosyl-L-methionine.

The protein belongs to the class I-like SAM-binding methyltransferase superfamily. MenG/UbiE family.

The enzyme catalyses a 2-demethylmenaquinol + S-adenosyl-L-methionine = a menaquinol + S-adenosyl-L-homocysteine + H(+). The catalysed reaction is a 2-methoxy-6-(all-trans-polyprenyl)benzene-1,4-diol + S-adenosyl-L-methionine = a 5-methoxy-2-methyl-3-(all-trans-polyprenyl)benzene-1,4-diol + S-adenosyl-L-homocysteine + H(+). It participates in quinol/quinone metabolism; menaquinone biosynthesis; menaquinol from 1,4-dihydroxy-2-naphthoate: step 2/2. It functions in the pathway cofactor biosynthesis; ubiquinone biosynthesis. Functionally, methyltransferase required for the conversion of demethylmenaquinol (DMKH2) to menaquinol (MKH2) and the conversion of 2-polyprenyl-6-methoxy-1,4-benzoquinol (DDMQH2) to 2-polyprenyl-3-methyl-6-methoxy-1,4-benzoquinol (DMQH2). The protein is Ubiquinone/menaquinone biosynthesis C-methyltransferase UbiE of Xanthomonas axonopodis pv. citri (strain 306).